A 404-amino-acid polypeptide reads, in one-letter code: Epoxide hydrolase 1 (404 aa).

The helical transmembrane segment at 74-96 (ILVRLLQFYYFVKFSAILFLGFA) threads the bilayer. An AB hydrolase-1 domain is found at 140–389 (PLMLFIHGYP…ASHWVQQDEP (250 aa)). The Nucleophile role is filled by Asp215. The Proton donor role is filled by Tyr327. Catalysis depends on His382, which acts as the Proton acceptor.

This sequence belongs to the AB hydrolase superfamily. Epoxide hydrolase family.

The protein localises to the membrane. It catalyses the reaction an epoxide + H2O = an ethanediol. It carries out the reaction 8,9-epoxy-(5Z,11Z,14Z)-eicosatrienoate + H2O = 8,9-dihydroxy-(5Z,11Z,14Z)-eicosatrienoate. The catalysed reaction is 11,12-epoxy-(5Z,8Z,14Z)-eicosatrienoate + H2O = 11,12-dihydroxy-(5Z,8Z,14Z)-eicosatrienoate. The enzyme catalyses 14,15-epoxy-(5Z,8Z,11Z)-eicosatrienoate + H2O = 14,15-dihydroxy-(5Z,8Z,11Z)-eicosatrienoate. It catalyses the reaction 12,13-epoxy-(9Z)-octadecenoate + H2O = 12,13-dihydroxy-(9Z)-octadecenoate. It carries out the reaction 9,10-epoxy-(12Z)-octadecenoate + H2O = 9,10-dihydroxy-(12Z)-octadecenoate. Its pathway is lipid metabolism. Its function is as follows. Catalyzes the hydrolysis of epoxide-containing fatty acids. Active against epoxyeicosatrienoic acids (EETs) including 8,9-epoxy-(5Z,11Z,14Z)-eicosatrienoate (8,9-EET), 11,12-epoxy-(5Z,8Z,14Z)-eicosatrienoate (11,12-EET) and 14,15-epoxy-(5Z,8Z,11Z)-eicosatrienoate (14,15-EET) and the linoleic acid metabolites 12,13-epoxy-(9Z)-octadecenoate (12,13-EpOME) and 9,10-epoxy-(12Z)-octadecenoate (9,10-EpOME). These epoxides function as lipid signaling molecules, the enzyme can deplete the supply of the epoxide signal by transforming them into diol species that are more readily eliminated through excretion. This chain is Epoxide hydrolase 1, found in Caenorhabditis elegans.